Consider the following 228-residue polypeptide: MPTLILVRHGQSQWNLENRFTGWWDVDLTEKGVEEAKAAGTLLKEKGVLPTVAFTSFQTRAIKTLHLALEEADRLWIPETKDWRLNERHYGGLTGLDKQEMRDKHGDEQVHIWRRSFDVPPPDMEPGHQYDPGADPRYDGIDVPTTESLKLTIERVLPYWESEILPVLASGETVIISAHGNSLRALVKHLSGISDEDITGLEIPTGQPIIYQFDDRMQPGERYYLKDS.

Residues 8–15 (RHGQSQWN), 21–22 (TG), Arg60, 87–90 (ERHY), Lys98, 114–115 (RR), and 180–181 (GN) contribute to the substrate site. Catalysis depends on His9, which acts as the Tele-phosphohistidine intermediate. Glu87 functions as the Proton donor/acceptor in the catalytic mechanism.

This sequence belongs to the phosphoglycerate mutase family. BPG-dependent PGAM subfamily. In terms of assembly, homodimer.

The catalysed reaction is (2R)-2-phosphoglycerate = (2R)-3-phosphoglycerate. It functions in the pathway carbohydrate degradation; glycolysis; pyruvate from D-glyceraldehyde 3-phosphate: step 3/5. Its function is as follows. Catalyzes the interconversion of 2-phosphoglycerate and 3-phosphoglycerate. In Erythrobacter litoralis (strain HTCC2594), this protein is 2,3-bisphosphoglycerate-dependent phosphoglycerate mutase.